The sequence spans 347 residues: Dihydroorotase (347 aa).

Positions 14 and 16 each coordinate Zn(2+). Substrate contacts are provided by residues 16 to 18 (HLR) and Asn42. Residues Lys100, His137, and His175 each contribute to the Zn(2+) site. An N6-carboxylysine modification is found at Lys100. A substrate-binding site is contributed by His137. Leu220 serves as a coordination point for substrate. Asp248 is a binding site for Zn(2+). Residue Asp248 is part of the active site. Residues His252 and Ala264 each coordinate substrate.

This sequence belongs to the metallo-dependent hydrolases superfamily. DHOase family. Class II DHOase subfamily. In terms of assembly, homodimer. The cofactor is Zn(2+).

The enzyme catalyses (S)-dihydroorotate + H2O = N-carbamoyl-L-aspartate + H(+). It functions in the pathway pyrimidine metabolism; UMP biosynthesis via de novo pathway; (S)-dihydroorotate from bicarbonate: step 3/3. In terms of biological role, catalyzes the reversible cyclization of carbamoyl aspartate to dihydroorotate. This Pseudomonas savastanoi pv. phaseolicola (strain 1448A / Race 6) (Pseudomonas syringae pv. phaseolicola (strain 1448A / Race 6)) protein is Dihydroorotase.